A 323-amino-acid chain; its full sequence is Acetyl esterase (323 aa).

An Involved in the stabilization of the negatively charged intermediate by the formation of the oxyanion hole motif is present at residues 91-93 (HGG). Active-site residues include serine 165, aspartate 262, and histidine 292.

Belongs to the 'GDXG' lipolytic enzyme family. In terms of assembly, homodimer. Interacts with MalT and MelA.

Its subcellular location is the cytoplasm. Functionally, displays esterase activity towards short chain fatty esters (acyl chain length of up to 8 carbons). Able to hydrolyze triacetylglycerol (triacetin) and tributyrylglycerol (tributyrin), but not trioleylglycerol (triolein) or cholesterol oleate. Negatively regulates MalT activity by antagonizing maltotriose binding. Inhibits MelA galactosidase activity. The protein is Acetyl esterase of Salmonella schwarzengrund (strain CVM19633).